Consider the following 121-residue polypeptide: Small ribosomal subunit protein uS13 (121 aa).

The disordered stretch occupies residues 95-121 (GLPVRGQKTKTNARTRKGKRKTVGAKS).

Belongs to the universal ribosomal protein uS13 family. In terms of assembly, part of the 30S ribosomal subunit. Forms a loose heterodimer with protein S19. Forms two bridges to the 50S subunit in the 70S ribosome.

Functionally, located at the top of the head of the 30S subunit, it contacts several helices of the 16S rRNA. In the 70S ribosome it contacts the 23S rRNA (bridge B1a) and protein L5 of the 50S subunit (bridge B1b), connecting the 2 subunits; these bridges are implicated in subunit movement. Contacts the tRNAs in the A and P-sites. This is Small ribosomal subunit protein uS13 from Campylobacter jejuni subsp. jejuni serotype O:6 (strain 81116 / NCTC 11828).